Reading from the N-terminus, the 505-residue chain is Deoxyguanosinetriphosphate triphosphohydrolase (505 aa).

Residues 66–273 form the HD domain; sequence RLTHSMEVQQ…MEAADDISYC (208 aa).

The protein belongs to the dGTPase family. Type 1 subfamily. Homotetramer. Mg(2+) serves as cofactor.

It carries out the reaction dGTP + H2O = 2'-deoxyguanosine + triphosphate + H(+). Functionally, dGTPase preferentially hydrolyzes dGTP over the other canonical NTPs. The chain is Deoxyguanosinetriphosphate triphosphohydrolase from Escherichia coli O127:H6 (strain E2348/69 / EPEC).